The chain runs to 410 residues: MSQFVFTSESVTEGHPDKICDQISDAVLDALLTQDPHSRVACEAVVNTGLCLITGEVTSTAEVDFINLVRSVIKEIGYKDAQAGGFDANSCAVLVALDKQSPDIAKGVDTAEDHTDDPFDKIGAGDQGIMFGYACNETPELMPLPISLAHRLARQLAKIRHQGTLKYLLPDGKTQVSVIYENNEPIAIDTIVISTQHTSEIDDLSSEADIRERITKDLWEYVVKPATSDLKLQPNQEKTRFLVNPTGKFVVGGPQGDAGLTGRKIIVDTYGGYARHGGGAFSGKDPTKVDRSAAYAARFVAKSIVAAKLAKRVEVQLSYAIGVANPVSILVEAYGSGKMSNQELTKVVKKHFDLRPGAIIEQFNLKNLPSKRSGRFYRDTAAYGHFGRPDLNLPWEKVDEKAKELIALHN.

ATP is bound at residue histidine 15. Aspartate 17 is a binding site for Mg(2+). Glutamate 43 is a binding site for K(+). Residues glutamate 56 and glutamine 100 each contribute to the L-methionine site. Residues 100-110 (QSPDIAKGVDT) are flexible loop. Residues 171–173 (DGK), 248–249 (KF), aspartate 257, 263–264 (RK), alanine 280, and lysine 284 contribute to the ATP site. Aspartate 257 lines the L-methionine pocket. Lysine 288 contacts L-methionine.

This sequence belongs to the AdoMet synthase family. Homotetramer; dimer of dimers. It depends on Mg(2+) as a cofactor. Requires K(+) as cofactor.

It localises to the cytoplasm. It carries out the reaction L-methionine + ATP + H2O = S-adenosyl-L-methionine + phosphate + diphosphate. Its pathway is amino-acid biosynthesis; S-adenosyl-L-methionine biosynthesis; S-adenosyl-L-methionine from L-methionine: step 1/1. Functionally, catalyzes the formation of S-adenosylmethionine (AdoMet) from methionine and ATP. The overall synthetic reaction is composed of two sequential steps, AdoMet formation and the subsequent tripolyphosphate hydrolysis which occurs prior to release of AdoMet from the enzyme. In Prochlorococcus marinus (strain MIT 9211), this protein is S-adenosylmethionine synthase.